Reading from the N-terminus, the 395-residue chain is Octopamine receptor beta-2R (395 aa).

Residues 1-42 (MDPINGSHSGANATISDITNGAYNATDAGEWTSSVMFKLRTC) lie on the Extracellular side of the membrane. Residues asparagine 5, asparagine 12, and asparagine 24 are each glycosylated (N-linked (GlcNAc...) asparagine). Residues 43–63 (VLLLIVIMAVLGNMLVIVSVM) form a helical membrane-spanning segment. Over 64-74 (RHRKLRVITNY) the chain is Cytoplasmic. The chain crosses the membrane as a helical span at residues 75 to 95 (FVVSLAFADILVAMVVMPFNF). Over 96–117 (SVQFNQGWVFGETICDLWNSSD) the chain is Extracellular. N-linked (GlcNAc...) asparagine glycosylation occurs at asparagine 114. The chain crosses the membrane as a helical span at residues 118–140 (VYFTSTSILHLCCISVDRYYAIV). The Cytoplasmic portion of the chain corresponds to 141 to 154 (KPLKYPIKMTKKMA). The chain crosses the membrane as a helical span at residues 155-175 (FVMLAATWLSPITISYVPIFM). Residues 176–202 (GWYTTTDFLESRRDDQCEFKVNKPYAV) lie on the Extracellular side of the membrane. A helical transmembrane segment spans residues 203–223 (ISSSISFWIPCTIMIFTYLAI). Residues 224–282 (FKEANRQEKALHARAGNAMLMHRHSREVSDKNGALHINATTPTKDRNLLKMKREHKAAR) are Cytoplasmic-facing. The chain crosses the membrane as a helical span at residues 283-303 (TLGIIMGAFILCWLPFFLYYV). Topologically, residues 304–315 (STSLCDSCNCPE) are extracellular. Residues 316 to 336 (VVTVIMFWTGYFNSALNPIIY) traverse the membrane as a helical segment. Residues 337–395 (AYFNRDFRNAFKNTLACAFCSFCKRSASDLDAMERLDRRGSAQLRVPIPSRRASDLASL) lie on the Cytoplasmic side of the membrane.

The protein belongs to the G-protein coupled receptor 1 family.

Its subcellular location is the cell membrane. Functionally, autoreceptor for octopamine, which is a neurotransmitter, neurohormone, and neuromodulator in invertebrates. Also acts as a receptor for tyramine, but with much less potency. The activity of this receptor is mediated by G proteins which activate adenylyl cyclase. This Chilo suppressalis (Asiatic rice borer moth) protein is Octopamine receptor beta-2R.